A 159-amino-acid chain; its full sequence is Betainyl-CoA thioesterase (159 aa).

Belongs to the betainyl-CoA thioesterase family.

The catalysed reaction is N,N,N-trimethylglycyl-CoA + H2O = glycine betaine + CoA + H(+). It functions in the pathway amine and polyamine metabolism; carnitine metabolism. Functionally, catalyzes the cleavage of betainyl-CoA (N,N,N-trimethylglycyl-CoA) into glycine betaine and coenzyme A. Is involved in a L-carnitine degradation pathway that allows P.aeruginosa to grow on L-carnitine as the sole source of carbon and nitrogen. In Pseudomonas aeruginosa (strain ATCC 15692 / DSM 22644 / CIP 104116 / JCM 14847 / LMG 12228 / 1C / PRS 101 / PAO1), this protein is Betainyl-CoA thioesterase.